Here is a 692-residue protein sequence, read N- to C-terminus: Non-hemolytic phospholipase C (692 aa).

Residues 1–35 (MISKSRRSFIRLAAGTVGATVATSMLPSSIQAALA) constitute a signal peptide (tat-type signal).

It belongs to the bacterial phospholipase C family. Post-translationally, predicted to be exported by the Tat system. The position of the signal peptide cleavage has not been experimentally proven.

The catalysed reaction is a 1,2-diacyl-sn-glycero-3-phosphocholine + H2O = phosphocholine + a 1,2-diacyl-sn-glycerol + H(+). In terms of biological role, hydrolyzes phosphatidylserine as well as phosphatidylcholine. This is Non-hemolytic phospholipase C (plcN) from Pseudomonas aeruginosa (strain ATCC 15692 / DSM 22644 / CIP 104116 / JCM 14847 / LMG 12228 / 1C / PRS 101 / PAO1).